The chain runs to 230 residues: MAHPSQLGFQDAASPVMEELLHFHDHALMIVFLISTLVLYIIVAMVSTKLTNKYILDSQEIEIIWTVLPAVILILIALPSLRILYLMDEINDPHLTIKAMGHQWYWSYEYTDYEDLGFDSYMIPTQDLAPGQFRLLEADHRMVVPVESPIRILISAEDVLHSWAVPALGIKMDAVPGRLNQTAFITSRPGVFYGQCSEICGANHSFMPIVVEAVPLEHFESWSSLMLEDA.

The Mitochondrial intermembrane segment spans residues 1-14; that stretch reads MAHPSQLGFQDAAS. Residues 15-45 traverse the membrane as a helical segment; sequence PVMEELLHFHDHALMIVFLISTLVLYIIVAM. Topologically, residues 46–59 are mitochondrial matrix; the sequence is VSTKLTNKYILDSQ. The chain crosses the membrane as a helical span at residues 60-87; the sequence is EIEIIWTVLPAVILILIALPSLRILYLM. Topologically, residues 88–230 are mitochondrial intermembrane; that stretch reads DEINDPHLTI…SWSSLMLEDA (143 aa). Cu cation-binding residues include H161, C196, E198, C200, H204, and M207. E198 provides a ligand contact to Mg(2+).

This sequence belongs to the cytochrome c oxidase subunit 2 family. As to quaternary structure, component of the cytochrome c oxidase (complex IV, CIV), a multisubunit enzyme composed of 14 subunits. The complex is composed of a catalytic core of 3 subunits MT-CO1, MT-CO2 and MT-CO3, encoded in the mitochondrial DNA, and 11 supernumerary subunits COX4I, COX5A, COX5B, COX6A, COX6B, COX6C, COX7A, COX7B, COX7C, COX8 and NDUFA4, which are encoded in the nuclear genome. The complex exists as a monomer or a dimer and forms supercomplexes (SCs) in the inner mitochondrial membrane with NADH-ubiquinone oxidoreductase (complex I, CI) and ubiquinol-cytochrome c oxidoreductase (cytochrome b-c1 complex, complex III, CIII), resulting in different assemblies (supercomplex SCI(1)III(2)IV(1) and megacomplex MCI(2)III(2)IV(2)). Found in a complex with TMEM177, COA6, COX18, COX20, SCO1 and SCO2. Interacts with TMEM177 in a COX20-dependent manner. Interacts with COX20. Interacts with COX16. Cu cation serves as cofactor.

The protein localises to the mitochondrion inner membrane. The catalysed reaction is 4 Fe(II)-[cytochrome c] + O2 + 8 H(+)(in) = 4 Fe(III)-[cytochrome c] + 2 H2O + 4 H(+)(out). Component of the cytochrome c oxidase, the last enzyme in the mitochondrial electron transport chain which drives oxidative phosphorylation. The respiratory chain contains 3 multisubunit complexes succinate dehydrogenase (complex II, CII), ubiquinol-cytochrome c oxidoreductase (cytochrome b-c1 complex, complex III, CIII) and cytochrome c oxidase (complex IV, CIV), that cooperate to transfer electrons derived from NADH and succinate to molecular oxygen, creating an electrochemical gradient over the inner membrane that drives transmembrane transport and the ATP synthase. Cytochrome c oxidase is the component of the respiratory chain that catalyzes the reduction of oxygen to water. Electrons originating from reduced cytochrome c in the intermembrane space (IMS) are transferred via the dinuclear copper A center (CU(A)) of subunit 2 and heme A of subunit 1 to the active site in subunit 1, a binuclear center (BNC) formed by heme A3 and copper B (CU(B)). The BNC reduces molecular oxygen to 2 water molecules using 4 electrons from cytochrome c in the IMS and 4 protons from the mitochondrial matrix. This Gadus morhua (Atlantic cod) protein is Cytochrome c oxidase subunit 2 (mt-co2).